We begin with the raw amino-acid sequence, 183 residues long: Large ribosomal subunit protein uL6 (183 aa).

The protein belongs to the universal ribosomal protein uL6 family. In terms of assembly, part of the 50S ribosomal subunit.

In terms of biological role, this protein binds to the 23S rRNA, and is important in its secondary structure. It is located near the subunit interface in the base of the L7/L12 stalk, and near the tRNA binding site of the peptidyltransferase center. In Porphyromonas gingivalis (strain ATCC 33277 / DSM 20709 / CIP 103683 / JCM 12257 / NCTC 11834 / 2561), this protein is Large ribosomal subunit protein uL6.